A 464-amino-acid chain; its full sequence is MLRAGRMDEFVTEEDEPWYDQRDLEQDLHLAAELGKTLLERNKELEDSLQQMYINNEEQVQEIEYLTKQMEMLREMNEQHAKVYEQLDVTARELEITNEKLVLESKGSQQKIDRLTGTMEMLQGQVDTLTARVEELRTLEELRVRREKKERRKTVHSFPCLKELCTAPRYEDSFMVSDPGSGDLEECQPADEENEHLRVMVSSLRAAVAAERGRREAAERECAAVLQEFERLEQRLLGAESCQRRVHELEAELQEMQQLRKSRVCLLSGEEGLEQTLLNCAPETDTPDEAVMAQNGDANDGAAPVRKSCSDTALDAISAVDASGRRKGSYALHANGVRKRGMSILREVDEQYHALLEKYEELLGKCRRHEESLRHAEVQTSRPVSRDPSMKECRVAEPQQPPPTPPQTPSTPEALEGISRQVEAVDKRLSQNTPEYKALFKEIFSRLQRTKSDINSTKGRKGGK.

Coiled-coil stretches lie at residues 31–154, 201–264, and 342–379; these read AAEL…RRKT, VSSL…KSRV, and MSIL…AEVQ. A disordered region spans residues 371-419; it reads ESLRHAEVQTSRPVSRDPSMKECRVAEPQQPPPTPPQTPSTPEALEGIS. Positions 384 to 395 are enriched in basic and acidic residues; the sequence is VSRDPSMKECRV. Over residues 399–409 the composition is skewed to pro residues; it reads QQPPPTPPQTP.

Belongs to the CDR2 family.

The chain is Cerebellar degeneration-related protein 2-like (cdr2l) from Danio rerio (Zebrafish).